We begin with the raw amino-acid sequence, 425 residues long: SrfA-induced gene G protein (425 aa).

Asparagine 25, asparagine 28, and asparagine 36 each carry an N-linked (GlcNAc...) asparagine glycan. Coiled coils occupy residues 41–91 (RDSE…RIRN), 172–208 (HEKQ…MKRT), and 292–340 (KFGQ…NYNI). A helical transmembrane segment spans residues 91–113 (NVFKVLITILVGSIIYGTYTNQF). The tract at residues 393–413 (KKPHADSNGHPKPYPHHHLLN) is disordered.

It is found in the membrane. This Dictyostelium discoideum (Social amoeba) protein is SrfA-induced gene G protein (sigG).